The sequence spans 276 residues: Octanoyltransferase LipM (276 aa).

In terms of domain architecture, BPL/LPL catalytic spans Gly-33 to Phe-247. The Acyl-thioester intermediate role is filled by Cys-150.

It belongs to the octanoyltransferase LipM family. As to quaternary structure, monomer.

It catalyses the reaction octanoyl-[ACP] + L-lysyl-[protein] = N(6)-octanoyl-L-lysyl-[protein] + holo-[ACP] + H(+). Its pathway is protein modification; protein lipoylation via endogenous pathway; protein N(6)-(lipoyl)lysine from octanoyl-[acyl-carrier-protein]. In terms of biological role, catalyzes the transfer of endogenously produced octanoic acid from octanoyl-acyl-carrier-protein onto the lipoyl domain of GcvH, an intermediate carrier during protein lipoylation. The polypeptide is Octanoyltransferase LipM (Exiguobacterium sp. (strain ATCC BAA-1283 / AT1b)).